The primary structure comprises 139 residues: Hydrogenase maturation factor HypA (139 aa).

His2 is a Ni(2+) binding site. Zn(2+) is bound by residues Cys75, Cys78, Cys111, and Cys114.

This sequence belongs to the HypA/HybF family.

Its function is as follows. Involved in the maturation of [NiFe] hydrogenases. Required for nickel insertion into the metal center of the hydrogenase. This Ignicoccus hospitalis (strain KIN4/I / DSM 18386 / JCM 14125) protein is Hydrogenase maturation factor HypA.